A 441-amino-acid polypeptide reads, in one-letter code: tRNA(Ile)-lysidine synthase (441 aa).

27–32 is an ATP binding site; sequence SGGVDS.

It belongs to the tRNA(Ile)-lysidine synthase family.

The protein resides in the cytoplasm. The catalysed reaction is cytidine(34) in tRNA(Ile2) + L-lysine + ATP = lysidine(34) in tRNA(Ile2) + AMP + diphosphate + H(+). In terms of biological role, ligates lysine onto the cytidine present at position 34 of the AUA codon-specific tRNA(Ile) that contains the anticodon CAU, in an ATP-dependent manner. Cytidine is converted to lysidine, thus changing the amino acid specificity of the tRNA from methionine to isoleucine. The polypeptide is tRNA(Ile)-lysidine synthase (Proteus mirabilis (strain HI4320)).